The sequence spans 816 residues: Metabotropic glutamate receptor-like protein E (816 aa).

The first 27 residues, 1-27 (MKIKIGNILKNVVILVIFSLFISKINS), serve as a signal peptide directing secretion. Residues 28–436 (EVVKPNPAKP…QVVVFDRTLN (409 aa)) are Extracellular-facing. Residues asparagine 68, asparagine 311, and asparagine 388 are each glycosylated (N-linked (GlcNAc...) asparagine). The chain crosses the membrane as a helical span at residues 437–457 (IVLGVITGVCVLIVIGIGSVI). Residues 458 to 469 (ALQWRKFRYSSP) lie on the Cytoplasmic side of the membrane. Residues 470–490 (LFCMFIIIGALMGLASVFTLL) traverse the membrane as a helical segment. The Extracellular segment spans residues 491-496 (PTPTTP). A helical transmembrane segment spans residues 497–517 (LCSGFPWLLGLGYVIVFGTLF). Over 518-541 (TKTWRTWRLFSNARKFKIIRITNK) the chain is Cytoplasmic. A helical transmembrane segment spans residues 542-562 (FIITLVGGFVLLESIFMIIWT). Topologically, residues 563–590 (AVDRPIPLAEPIFKAGEAQLQCTSDSEA) are extracellular. Residues 591-611 (WWYVFVFYKVFYILFGVFLAF) traverse the membrane as a helical segment. Residues 612–625 (KTRNVVDSLNESKP) lie on the Cytoplasmic side of the membrane. Residues 626–646 (ITLALYNLTFVMVVAIALGFI) form a helical membrane-spanning segment. The Extracellular portion of the chain corresponds to 647 to 653 (LRDNPIA). A helical membrane pass occupies residues 654–674 (IIVIQTIAILLGFTVTVSVLF). Over 675 to 816 (LPKVWMILSG…KKKKKKNNNK (142 aa)) the chain is Cytoplasmic. Residues 697 to 718 (DSMGRSNGNTTEAESTRGYTNK) form a disordered region.

Belongs to the G-protein coupled receptor 3 family.

The protein localises to the membrane. Functionally, may be involved in early development in cAMP sensing and subsequent chemotactic response. Probable receptor of GABA and glutamate, leading respectively to the induction or inhibition of SDF-2 formation. This Dictyostelium discoideum (Social amoeba) protein is Metabotropic glutamate receptor-like protein E (grlE).